Consider the following 65-residue polypeptide: Large ribosomal subunit protein bL35 (65 aa).

Belongs to the bacterial ribosomal protein bL35 family.

The protein is Large ribosomal subunit protein bL35 of Nostoc sp. (strain PCC 7120 / SAG 25.82 / UTEX 2576).